A 1968-amino-acid polypeptide reads, in one-letter code: Signal element on autosome protein 2 (1968 aa).

Residues 72–88 show a composition bias toward low complexity; that stretch reads TSSSFSSSLATTTTTSS. 2 disordered regions span residues 72–252 and 271–364; these read TSSS…TPTQ and QVQQ…VQEQ. Over residues 107–119 the composition is skewed to basic residues; the sequence is SHHHPSSSHHHHP. Composition is skewed to low complexity over residues 120-134, 144-165, 219-232, and 298-338; these read GQQQ…SHLQ, HPYY…YGQA, DQPS…LPPL, and LSSI…SSSS. A compositionally biased stretch (polar residues) spans 346 to 362; the sequence is PNASSSSLIKRQSQDVQ. The C2H2-type 1 zinc-finger motif lies at 413–440; it reads YQCPNCNRNLANARNLQRHRQTCGSAQH. 2 disordered regions span residues 451–499 and 538–601; these read RSPP…LYSP and WSRD…TLDP. Pro residues predominate over residues 452-467; the sequence is SPPPCASAPPVAPPTA. A compositionally biased stretch (polar residues) spans 472–482; it reads FQHHNSTGNLT. Positions 483–498 are enriched in low complexity; that stretch reads LSYSSSSSRHQSSLYS. The segment covering 570 to 594 has biased composition (basic and acidic residues); it reads PLHHLDSFDSADHRKETPRECHEPD. The segment at 651-672 adopts a C2H2-type 2; degenerate zinc-finger fold; sequence FTCEACKKSVSSERSLRRHYNT. Disordered stretches follow at residues 681 to 712 and 785 to 854; these read AASG…GPEK and VTSA…TGNP. Positions 690–702 are enriched in basic residues; it reads TTKRKPATKRPSK. Residues 794–804 show a composition bias toward low complexity; sequence HQLPHQQPQQQ. Acidic residues predominate over residues 812-824; sequence LLNEQDESADDDG. Residues 827–851 are compositionally biased toward low complexity; sequence RSSSGTVSNSTTTTTTATTTSSKST. The C2H2-type 3; degenerate zinc-finger motif lies at 856–875; it reads FTCEHCARQLCSMSNLKRHR. Disordered stretches follow at residues 882–905, 975–1069, 1083–1227, and 1246–1273; these read ASSS…TAPA, GDAL…EHKN, RMDA…SPLD, and PGPL…SQQA. 3 stretches are compositionally biased toward low complexity: residues 981–1015, 1023–1046, and 1108–1131; these read QQHQ…AGRI, ILNQ…MLNP, and PQRS…YQVQ. Positions 1136 to 1146 are enriched in pro residues; that stretch reads PLPPMQLPPLQ. Positions 1147 to 1185 are enriched in low complexity; that stretch reads NPHNQQQQHQMLHQSQMNYQQVQQVQQVQHVQQQQNLQN. Polar residues-rich tracts occupy residues 1201–1211 and 1251–1273; these read APGNRSRSHSN and QGQS…SQQA. The C2H2-type 4 zinc-finger motif lies at 1274–1297; sequence YICPECKKTYASRKNVKRHRMAVH. Disordered stretches follow at residues 1333–1478, 1569–1608, 1624–1671, and 1769–1822; these read TPDS…ADEE, SVGL…QQQQ, HPPM…LTCS, and ADRQ…PSTN. A compositionally biased stretch (basic and acidic residues) spans 1388 to 1403; that stretch reads ERQEPPKKPVADDHKS. 2 stretches are compositionally biased toward pro residues: residues 1407-1421 and 1429-1445; these read PLPP…PPPY and LNPP…PPLQ. The span at 1589-1608 shows a compositional bias: low complexity; that stretch reads QHPQQHPQQHPQQHPQQQQQ. Polar residues predominate over residues 1624–1633; it reads HPPMPVSQQF. The C2H2-type 5; degenerate zinc-finger motif lies at 1668-1694; it reads LTCSGCKKILGSDYSLRRHRAGCADVQ. The segment covering 1800 to 1811 has biased composition (low complexity); it reads SSSSSSSTSSAS. The C2H2-type 6 zinc finger occupies 1826-1858; that stretch reads HYCQFPECGKNFSSEWNLARHTRESCKMTTRAH.

As to expression, expressed in seam cells, intestine cells, pharyngeal muscles and nerve ring neurons.

Its subcellular location is the nucleus. The protein localises to the cytoplasm. In terms of biological role, RNA-binding protein, which regulates the expression of proteins required to control developmental timing of events during the L2 to L3 larval stage switch. Binds to the 3'UTR of the transcript of the heterochronic protein lin-28 to post-transcriptionally negatively regulate its expression in certain tissue types in the later larval stages. During larval development, controls the timing of seam cell division and terminal differentiation into adult alae. In vitro, it can also bind to DNA through its first zinc finger. May bind directly or indirectly to the promoter of the sex-determining factor xol-1 to activate its transcription. Its activation of xol-1 transcription controls sex determination and X chromosome dosage compensation to promote male development. Through the negative regulation of lin-28 transcript, it also has a role in the fox-1-sex-1-mediated determination of sexual fate. Acts in the intestine to play a role in regulating adult lifespan. This Caenorhabditis elegans protein is Signal element on autosome protein 2.